The chain runs to 158 residues: MTNGNGAPPEAVAAPQLNVLAQYTKDLSFENPNAPASLAQQQQQPAINIQINVGANNLAENEYEVTLSVEGKAESGSTVLFSFELAYAGVFRIVNVPQENLHPLIMIECPRLLFPFAREIIASAVRDGGFPPLMLDPVDFVGLYRQNMERQAQQGQPS.

This sequence belongs to the SecB family. As to quaternary structure, homotetramer, a dimer of dimers. One homotetramer interacts with 1 SecA dimer.

It is found in the cytoplasm. Functionally, one of the proteins required for the normal export of preproteins out of the cell cytoplasm. It is a molecular chaperone that binds to a subset of precursor proteins, maintaining them in a translocation-competent state. It also specifically binds to its receptor SecA. This chain is Protein-export protein SecB, found in Rhodopseudomonas palustris (strain BisB5).